The following is a 312-amino-acid chain: MNITFLGTSSGVPTLTRNVSSLALKLSQTAEVWLFDCGEGTQHQLMKSNIKSSQIKKIFITHMHGDHIYGLPGLLATLGLSGNSNGIEIYGPSELKSFVTSALESSFCKLSFPLRFRAVEDFASLNKILFENDKLKVHCACLKHRLPAYGYRVSEKDKPGVFDIKKAEDSNIPPGPIYSELQAGKTVQLKDGRSFNGQDFCGPPRKGESFVYCTDTVFSKSAVNLSKNADLLVHESTFSKEDEKMAYEKLHSTTIMAAKTALLSNVKKLIITHLSPRYTQRSSIKPSDLLKEAQKIFPNTYLAKDFLTAEIK.

His-62, His-64, Asp-66, His-67, His-144, Asp-215, and His-273 together coordinate Zn(2+). Asp-66 serves as the catalytic Proton acceptor.

It belongs to the RNase Z family. Homodimer. The cofactor is Zn(2+).

It carries out the reaction Endonucleolytic cleavage of RNA, removing extra 3' nucleotides from tRNA precursor, generating 3' termini of tRNAs. A 3'-hydroxy group is left at the tRNA terminus and a 5'-phosphoryl group is left at the trailer molecule.. Zinc phosphodiesterase, which displays some tRNA 3'-processing endonuclease activity. Probably involved in tRNA maturation, by removing a 3'-trailer from precursor tRNA. The chain is Ribonuclease Z from Prochlorococcus marinus subsp. pastoris (strain CCMP1986 / NIES-2087 / MED4).